Consider the following 207-residue polypeptide: Cyclic di-AMP synthase CdaS (207 aa).

Residues 13–37 are a coiled coil; sequence AFKGKIQVYLEQILGDASLILKTLH. One can recognise a DAC domain in the interval 63 to 205; it reads SFYLQSYIEE…DGVLYPLISP (143 aa).

The protein belongs to the adenylate cyclase family. DacB/CdaS subfamily. In terms of assembly, forms dimers and probably also hexamers; the dimer may be active while the hexamer may not be active.

The catalysed reaction is 2 ATP = 3',3'-c-di-AMP + 2 diphosphate. Functionally, one of 3 paralogous diadenylate cyclases (DAC) in this bacteria, catalyzing the condensation of 2 ATP molecules into cyclic di-AMP (c-di-AMP). Upon expression in E.coli leads to c-di-AMP synthesis. Overexpression of the hyperactive mutant (L44F) in the absence of c-di-AMP phosphodiesterase GdpP leads to growth defects in log phase (long curly cell filaments) that disappear upon sporulation; spore formation is normal, showing sporulation is insensitive to the excess c-di-AMP. In B.subtilis c-di-AMP is a second messenger that mediates growth, DNA repair and cell wall homeostasis; it is toxic when present in excess. In Bacillus subtilis (strain 168), this protein is Cyclic di-AMP synthase CdaS.